The chain runs to 125 residues: Glycine cleavage system H protein (125 aa).

One can recognise a Lipoyl-binding domain in the interval 19–101; the sequence is VAVVGISDYA…EGKGWFMKLK (83 aa). K60 carries the N6-lipoyllysine modification.

It belongs to the GcvH family. As to quaternary structure, the glycine cleavage system is composed of four proteins: P, T, L and H. Requires (R)-lipoate as cofactor.

Functionally, the glycine cleavage system catalyzes the degradation of glycine. The H protein shuttles the methylamine group of glycine from the P protein to the T protein. The protein is Glycine cleavage system H protein of Xanthobacter autotrophicus (strain ATCC BAA-1158 / Py2).